The following is a 207-amino-acid chain: 3-demethoxyubiquinol 3-hydroxylase (207 aa).

Fe cation contacts are provided by Glu-56, Glu-86, His-89, Glu-138, Glu-170, and His-173.

This sequence belongs to the COQ7 family. It depends on Fe cation as a cofactor.

It localises to the cell membrane. The enzyme catalyses a 5-methoxy-2-methyl-3-(all-trans-polyprenyl)benzene-1,4-diol + AH2 + O2 = a 3-demethylubiquinol + A + H2O. It participates in cofactor biosynthesis; ubiquinone biosynthesis. Functionally, catalyzes the hydroxylation of 2-nonaprenyl-3-methyl-6-methoxy-1,4-benzoquinol during ubiquinone biosynthesis. This Cupriavidus taiwanensis (strain DSM 17343 / BCRC 17206 / CCUG 44338 / CIP 107171 / LMG 19424 / R1) (Ralstonia taiwanensis (strain LMG 19424)) protein is 3-demethoxyubiquinol 3-hydroxylase.